The chain runs to 1805 residues: Obscurin-like protein 1 (1805 aa).

At Ser10 the chain carries Phosphoserine. The Ig-like 1 domain maps to 12 to 100; it reads PCFLRFPRPV…GEAYAAAAVT (89 aa). The interval 17–19 is interaction with TTN; it reads FPR. A disulfide bridge connects residues Cys33 and Cys84. The segment at 85–94 is interaction with TTN; it reads RARNAAGEAY. The span at 104–122 shows a compositional bias: pro residues; that stretch reads PPAPEPEPQSSECPPPPPG. Residues 104–131 form a disordered region; it reads PPAPEPEPQSSECPPPPPGTGEGAPVFL. Ig-like domains are found at residues 128–225, 240–330, and 339–425; these read PVFL…ALLQ, PPVR…QTLS, and PRLR…ANVT. Intrachain disulfides connect Cys149–Cys209, Cys267–Cys319, and Cys362–Cys412. Residues 517-615 form the Fibronectin type-III domain; that stretch reads PPGPPVLVEM…FNGSAHLVPT (99 aa). Ig-like domains are found at residues 720–800, 804–891, 902–982, 986–1075, 1078–1165, 1176–1261, 1266–1351, 1355–1442, 1536–1628, and 1702–1798; these read PQDK…FSVT, PPVH…FTVT, PNGK…FTIT, PPVR…VTVT, PERI…FNVS, PEAV…FNVQ, PPVK…ARLH, TELL…ARLS, PVTI…REVS, and PAQS…ADTQ. 6 disulfide bridges follow: Cys738–Cys788, Cys829–Cys879, Cys920–Cys970, Cys1011–Cys1061, Cys1103–Cys1153, and Cys1195–Cys1245. The cysteines at positions 1558 and 1608 are disulfide-linked.

In terms of assembly, component of the 3M complex, composed of core components CUL7, CCDC8 and OBSL1. Interacts with CCDC8. Interacts with CUL7; the interaction is direct. Interacts with FBXW8. Interacts (via N-terminal Ig-like domain) with TTN/titin (via C-terminal Ig-like domain); the interaction is direct. Expressed in granule neurons, with levels decreasing with neuronal maturation.

It localises to the cytoplasm. The protein localises to the perinuclear region. It is found in the golgi apparatus. Core component of the 3M complex, a complex required to regulate microtubule dynamics and genome integrity. It is unclear how the 3M complex regulates microtubules, it could act by controlling the level of a microtubule stabilizer. Acts as a regulator of the Cul7-RING(FBXW8) ubiquitin-protein ligase, playing a critical role in the ubiquitin ligase pathway that regulates Golgi morphogenesis and dendrite patterning in brain. Required to localize CUL7 to the Golgi apparatus in neurons. The sequence is that of Obscurin-like protein 1 (Obsl1) from Rattus norvegicus (Rat).